The following is a 522-amino-acid chain: Sugar transport protein 1 (522 aa).

Over Met-1–Phe-22 the chain is Cytoplasmic. Residues Val-23–Ile-43 form a helical membrane-spanning segment. At Ser-44–Ser-79 the chain is on the extracellular side. A helical transmembrane segment spans residues Pro-80–Ala-100. Over Ser-101–Gly-117 the chain is Cytoplasmic. Residues Ile-118–Val-138 form a helical membrane-spanning segment. Residues Gly-139–Arg-140 are Extracellular-facing. A helical transmembrane segment spans residues Ile-141 to Met-161. The Cytoplasmic segment spans residues Ala-162–Asn-171. A helical transmembrane segment spans residues Ile-172 to Phe-192. The Extracellular portion of the chain corresponds to Ala-193–Arg-202. Residues Leu-203 to Pro-223 form a helical membrane-spanning segment. The Cytoplasmic segment spans residues Asp-224–Met-289. Ser-252 carries the phosphoserine modification. A helical membrane pass occupies residues Ile-290–Phe-310. The Extracellular portion of the chain corresponds to Asn-311–Leu-321. Residues Met-322–Val-342 form a helical membrane-spanning segment. The Cytoplasmic segment spans residues Asp-343 to Arg-348. A helical transmembrane segment spans residues Phe-349–Ile-369. Topologically, residues Gly-370–Lys-384 are extracellular. The chain crosses the membrane as a helical span at residues Trp-385 to Trp-405. The Cytoplasmic portion of the chain corresponds to Gly-406–Ser-427. Residues Ile-428 to Leu-448 traverse the membrane as a helical segment. The Extracellular portion of the chain corresponds to Cys-449–Lys-452. Residues Phe-453 to Phe-473 traverse the membrane as a helical segment. Over Leu-474–Val-522 the chain is Cytoplasmic.

It belongs to the major facilitator superfamily. Sugar transporter (TC 2.A.1.1) family. As to expression, mostly expressed in young leaves, especially in guard cells (at protein level). Also present in roots.

The protein localises to the cell membrane. In terms of biological role, major hexose transporter. Mediates an active uptake of hexoses, by sugar/hydrogen symport. Can transport glucose, 3-O-methylglucose, fructose, xylose, mannose, galactose, fucose, 2-deoxyglucose and arabinose. Confers sensitivity to galactose in seedlings. The sequence is that of Sugar transport protein 1 (STP1) from Arabidopsis thaliana (Mouse-ear cress).